Consider the following 249-residue polypeptide: tRNA pseudouridine synthase A (249 aa).

Catalysis depends on aspartate 53, which acts as the Nucleophile. Residue tyrosine 111 coordinates substrate.

It belongs to the tRNA pseudouridine synthase TruA family. In terms of assembly, homodimer.

The enzyme catalyses uridine(38/39/40) in tRNA = pseudouridine(38/39/40) in tRNA. Functionally, formation of pseudouridine at positions 38, 39 and 40 in the anticodon stem and loop of transfer RNAs. This chain is tRNA pseudouridine synthase A, found in Streptococcus sanguinis (strain SK36).